The sequence spans 204 residues: MPFELPALPYPYDALEPHIDKETMNIHHTKHHNTYVTNLNAALEGHPDLQNKSLEELLSNLEALPESIRTAVRNNGGGHANHSLFWTILSPNGGGEPTGELAEAINKKFGSFTAFKDEFSKAAAGRFGSGWAWLVVNNGELEITSTPNQDSPIMEGKTPILGLDVWEHAYYLKYQNRRPEYIAAFWNIVNWDEVAKRYSEAKAK.

Mn(2+) is bound at residue His27. A phosphothreonine mark is found at Thr34 and Thr70. The Mn(2+) site is built by His82, Asp164, and His168.

It belongs to the iron/manganese superoxide dismutase family. Homodimer. Requires Mn(2+) as cofactor.

The catalysed reaction is 2 superoxide + 2 H(+) = H2O2 + O2. Destroys superoxide anion radicals which are normally produced within the cells and which are toxic to biological systems. The chain is Superoxide dismutase [Mn] (sodA) from Bacillus caldotenax.